A 290-amino-acid chain; its full sequence is Hydroxyacylglutathione hydrolase-like protein (290 aa).

Residues His54, His56, Asp58, His59, His110, Asp134, and His172 each coordinate Zn(2+).

It belongs to the metallo-beta-lactamase superfamily. Glyoxalase II family. The cofactor is Zn(2+).

Hydrolase acting on ester bonds. This chain is Hydroxyacylglutathione hydrolase-like protein (HAGHL), found in Homo sapiens (Human).